A 422-amino-acid chain; its full sequence is Putative acid phosphatase 5 (422 aa).

A signal peptide spans 1-13 (MLLLLVLLIGASG). His-40 functions as the Nucleophile in the catalytic mechanism. 3 N-linked (GlcNAc...) asparagine glycosylation sites follow: Asn-104, Asn-210, and Asn-218. Cystine bridges form between Cys-152-Cys-363, Cys-205-Cys-302, and Cys-338-Cys-342. The Proton donor role is filled by Asp-279. Residues Asn-312 and Asn-323 are each glycosylated (N-linked (GlcNAc...) asparagine).

It belongs to the histidine acid phosphatase family.

The enzyme catalyses a phosphate monoester + H2O = an alcohol + phosphate. This chain is Putative acid phosphatase 5 (pho-5), found in Caenorhabditis elegans.